A 25-amino-acid polypeptide reads, in one-letter code: Acyl carrier protein (25 aa).

The Carrier domain maps to 2-25 (ESIEQRVKKIVAEQLGVAEAEIKA).

Belongs to the acyl carrier protein (ACP) family. Post-translationally, 4'-phosphopantetheine is transferred from CoA to a specific serine of apo-ACP by AcpS. This modification is essential for activity because fatty acids are bound in thioester linkage to the sulfhydryl of the prosthetic group.

Its subcellular location is the cytoplasm. It functions in the pathway lipid metabolism; fatty acid biosynthesis. Carrier of the growing fatty acid chain in fatty acid biosynthesis. This chain is Acyl carrier protein (acpP), found in Alcaligenes faecalis.